The following is a 337-amino-acid chain: Viral cathepsin (337 aa).

The signal sequence occupies residues 1-16; the sequence is MNKILILLLLVSAVLT. A propeptide spans 17 to 126 (activation peptide); that stretch reads SHDQVVAVTI…VVDGPGQRQR (110 aa). Intrachain disulfides connect cysteine 147–cysteine 188, cysteine 181–cysteine 221, and cysteine 276–cysteine 324. Residue cysteine 150 is part of the active site. Catalysis depends on residues histidine 283 and asparagine 303.

The protein belongs to the peptidase C1 family. In terms of processing, synthesized as an inactive proenzyme and activated by proteolytic removal of the inhibitory propeptide.

The enzyme catalyses Endopeptidase of broad specificity, hydrolyzing substrates of both cathepsin L and cathepsin B.. Its function is as follows. Cysteine protease that plays an essential role in host liquefaction to facilitate horizontal transmission of the virus. May participate in the degradation of foreign protein expressed by the baculovirus system. This Mamestra configurata (bertha armyworm) protein is Viral cathepsin (VCATH).